Reading from the N-terminus, the 100-residue chain is Nucleoid-associated protein HPG27_32 (100 aa).

It belongs to the YbaB/EbfC family. In terms of assembly, homodimer.

Its subcellular location is the cytoplasm. It is found in the nucleoid. Binds to DNA and alters its conformation. May be involved in regulation of gene expression, nucleoid organization and DNA protection. The sequence is that of Nucleoid-associated protein HPG27_32 from Helicobacter pylori (strain G27).